Here is a 238-residue protein sequence, read N- to C-terminus: uncharacterized protein (238 aa).

Residues 1-20 form the signal peptide; sequence MNNVKLLIAGSAFFAMSAQA.

It to E.coli GltF.

This is an uncharacterized protein from Escherichia coli (strain K12).